Here is a 245-residue protein sequence, read N- to C-terminus: Pyridoxine 5'-phosphate synthase (245 aa).

3-amino-2-oxopropyl phosphate is bound at residue N7. Residue 9 to 10 (DH) participates in 1-deoxy-D-xylulose 5-phosphate binding. R18 is a 3-amino-2-oxopropyl phosphate binding site. H43 functions as the Proton acceptor in the catalytic mechanism. 1-deoxy-D-xylulose 5-phosphate is bound by residues R45 and H50. E70 functions as the Proton acceptor in the catalytic mechanism. T100 contributes to the 1-deoxy-D-xylulose 5-phosphate binding site. H190 (proton donor) is an active-site residue. Residues G191 and 212–213 (GH) each bind 3-amino-2-oxopropyl phosphate.

This sequence belongs to the PNP synthase family. Homooctamer; tetramer of dimers.

The protein localises to the cytoplasm. The catalysed reaction is 3-amino-2-oxopropyl phosphate + 1-deoxy-D-xylulose 5-phosphate = pyridoxine 5'-phosphate + phosphate + 2 H2O + H(+). It participates in cofactor biosynthesis; pyridoxine 5'-phosphate biosynthesis; pyridoxine 5'-phosphate from D-erythrose 4-phosphate: step 5/5. Catalyzes the complicated ring closure reaction between the two acyclic compounds 1-deoxy-D-xylulose-5-phosphate (DXP) and 3-amino-2-oxopropyl phosphate (1-amino-acetone-3-phosphate or AAP) to form pyridoxine 5'-phosphate (PNP) and inorganic phosphate. This chain is Pyridoxine 5'-phosphate synthase, found in Prochlorococcus marinus (strain NATL1A).